The sequence spans 133 residues: Ribosomal silencing factor RsfS (133 aa).

This sequence belongs to the Iojap/RsfS family. Interacts with ribosomal protein uL14 (rplN).

Its subcellular location is the cytoplasm. In terms of biological role, functions as a ribosomal silencing factor. Interacts with ribosomal protein uL14 (rplN), blocking formation of intersubunit bridge B8. Prevents association of the 30S and 50S ribosomal subunits and the formation of functional ribosomes, thus repressing translation. The sequence is that of Ribosomal silencing factor RsfS from Zymomonas mobilis subsp. mobilis (strain ATCC 31821 / ZM4 / CP4).